Consider the following 104-residue polypeptide: Urease subunit beta (104 aa).

Belongs to the urease beta subunit family. Heterotrimer of UreA (gamma), UreB (beta) and UreC (alpha) subunits. Three heterotrimers associate to form the active enzyme.

The protein resides in the cytoplasm. It catalyses the reaction urea + 2 H2O + H(+) = hydrogencarbonate + 2 NH4(+). It functions in the pathway nitrogen metabolism; urea degradation; CO(2) and NH(3) from urea (urease route): step 1/1. This is Urease subunit beta from Rhodococcus jostii (strain RHA1).